The primary structure comprises 326 residues: Biotin synthase (326 aa).

Residues 48 to 277 form the Radical SAM core domain; sequence FGAGKVDLCS…SARIRMAGGR (230 aa). The [4Fe-4S] cluster site is built by cysteine 66, cysteine 70, and cysteine 73. The [2Fe-2S] cluster site is built by serine 110, cysteine 142, cysteine 202, and arginine 272.

Belongs to the radical SAM superfamily. Biotin synthase family. Homodimer. The cofactor is [4Fe-4S] cluster. Requires [2Fe-2S] cluster as cofactor.

The catalysed reaction is (4R,5S)-dethiobiotin + (sulfur carrier)-SH + 2 reduced [2Fe-2S]-[ferredoxin] + 2 S-adenosyl-L-methionine = (sulfur carrier)-H + biotin + 2 5'-deoxyadenosine + 2 L-methionine + 2 oxidized [2Fe-2S]-[ferredoxin]. It participates in cofactor biosynthesis; biotin biosynthesis; biotin from 7,8-diaminononanoate: step 2/2. Its function is as follows. Catalyzes the conversion of dethiobiotin (DTB) to biotin by the insertion of a sulfur atom into dethiobiotin via a radical-based mechanism. The polypeptide is Biotin synthase (Heliobacterium modesticaldum (strain ATCC 51547 / Ice1)).